A 229-amino-acid chain; its full sequence is Large ribosomal subunit protein uL1 (229 aa).

The protein belongs to the universal ribosomal protein uL1 family. In terms of assembly, part of the 50S ribosomal subunit.

Its function is as follows. Binds directly to 23S rRNA. The L1 stalk is quite mobile in the ribosome, and is involved in E site tRNA release. In terms of biological role, protein L1 is also a translational repressor protein, it controls the translation of the L11 operon by binding to its mRNA. The chain is Large ribosomal subunit protein uL1 from Streptococcus pneumoniae serotype 2 (strain D39 / NCTC 7466).